The chain runs to 141 residues: Hemoglobin subunit alpha-D (141 aa).

Positions 1–141 constitute a Globin domain; it reads MLSADEKQLI…VSDVLAEKYR (141 aa). 2 residues coordinate heme b: His58 and His87.

This sequence belongs to the globin family. As to quaternary structure, heterotetramer of two alpha-D chains and two beta chains. As to expression, red blood cells.

Involved in oxygen transport from the lung to the various peripheral tissues. In Phrynops hilarii (Snake-necked turtle), this protein is Hemoglobin subunit alpha-D (HBAD).